A 309-amino-acid polypeptide reads, in one-letter code: Chronophin (309 aa).

Catalysis depends on aspartate 25, which acts as the Nucleophile. Mg(2+) is bound by residues aspartate 25 and aspartate 27. The Proton donor role is filled by aspartate 27. Substrate-binding positions include serine 58 to asparagine 60, histidine 178, and lysine 209. Position 234 (aspartate 234) interacts with Mg(2+).

The protein belongs to the HAD-like hydrolase superfamily. As to quaternary structure, homodimer. Mg(2+) is required as a cofactor.

The protein resides in the cytoplasm. It is found in the cytosol. Its subcellular location is the cytoskeleton. It localises to the cell projection. The protein localises to the ruffle membrane. The protein resides in the lamellipodium membrane. It is found in the cell membrane. The enzyme catalyses pyridoxal 5'-phosphate + H2O = pyridoxal + phosphate. It catalyses the reaction pyridoxine 5'-phosphate + H2O = pyridoxine + phosphate. The catalysed reaction is pyridoxamine + phosphate = pyridoxamine 5'-phosphate + H2O. It carries out the reaction O-phospho-L-seryl-[protein] + H2O = L-seryl-[protein] + phosphate. In terms of biological role, functions as a pyridoxal phosphate (PLP) phosphatase, which also catalyzes the dephosphorylation of pyridoxine 5'-phosphate (PNP) and pyridoxamine 5'-phosphate (PMP), with order of substrate preference PLP &gt; PNP &gt; PMP and therefore plays a role in vitamin B6 metabolism. Also functions as a protein serine phosphatase that specifically dephosphorylates 'Ser-3' in proteins of the actin-depolymerizing factor (ADF)/cofilin family like CFL1 and DSTN. Thereby, regulates cofilin-dependent actin cytoskeleton reorganization, being required for normal progress through mitosis and normal cytokinesis. Does not dephosphorylate phosphothreonines in LIMK1. Does not dephosphorylate peptides containing phosphotyrosine. In Rattus norvegicus (Rat), this protein is Chronophin.